A 147-amino-acid chain; its full sequence is MNPAHLLVLAAVCVSLLGAAIVPPQPLNLYQFNNMIQCANHGNRPTWHYAHYGCYCGKGGGGTAVDELDRCCQTHDNCYGEAEKLPKCSPYYKTYKYDCSEGKLTCKDAPGSCERSVCDCDRVAANCFAGAPYNNDNFFISFKENCQ.

The signal sequence occupies residues 1–19 (MNPAHLLVLAAVCVSLLGA). Residues 20 to 27 (AIVPPQPL) constitute a propeptide that is removed on maturation. Cystine bridges form between Cys38/Cys99, Cys54/Cys146, Cys56/Cys72, Cys71/Cys127, Cys78/Cys120, Cys88/Cys113, and Cys106/Cys118. Ca(2+)-binding residues include Tyr55, Gly57, and Gly59. His75 is a catalytic residue. Position 76 (Asp76) interacts with Ca(2+). Asp121 is an active-site residue.

Belongs to the phospholipase A2 family. Group I subfamily. D49 sub-subfamily. It depends on Ca(2+) as a cofactor. Expressed by the venom gland.

Its subcellular location is the secreted. It carries out the reaction a 1,2-diacyl-sn-glycero-3-phosphocholine + H2O = a 1-acyl-sn-glycero-3-phosphocholine + a fatty acid + H(+). PLA2 catalyzes the calcium-dependent hydrolysis of the 2-acyl groups in 3-sn-phosphoglycerides. The polypeptide is Acidic phospholipase A2 1 (Bungarus flaviceps flaviceps (Red-headed krait)).